The sequence spans 114 residues: Transmembrane protein 256 homolog (114 aa).

The first 25 residues, 1–25 (MAAGRVWGRLGAVSGALAVTAGAYG), serve as a signal peptide directing secretion. Over 26 to 64 (AHGFRRSDRDEYLKELFETGNRYHFLHSLALLAVPHCRR) the chain is Extracellular. Residues 65–85 (PLLAGSLLTSGIVLFSGTFYY) form a helical membrane-spanning segment. The Cytoplasmic segment spans residues 86–93 (QALSGDPT). The helical transmembrane segment at 94–114 (LTKAAPYGGTLLILGWAAMAL) threads the bilayer.

It belongs to the TMEM256 family.

The protein resides in the cell membrane. This Bufo gargarizans (Asian toad) protein is Transmembrane protein 256 homolog.